A 325-amino-acid chain; its full sequence is Hydroxylase/desaturase poxK (325 aa).

The span at M1–A12 shows a compositional bias: low complexity. The interval M1–K25 is disordered.

It belongs to the asaB hydroxylase/desaturase family.

The protein operates within secondary metabolite biosynthesis. Functionally, hydroxylase/desaturase; part of the gene cluster that mediates the biosynthesis of oxaleimides, cytotoxic compounds containing an unusual disubstituted succinimide moiety. The first step of the pathway is provided by the HR-PKS poxF that serves in a new mode of collaborative biosynthesis with the PKS-NRPS poxE, by providing the olefin containing amino acid substrate via the synthesis of an ACP-bound dec-4-enoate. The cytochrome P450 monooxygenase poxM-catalyzed oxidation at the alpha-position creates the enzyme-bound 2-hydroxydec-4-enoyl-ACP thioester, which may be prone to spontaneous hydrolysis to yield 2-hydroxydec-4-enoic acid due to increased electrophilicity of the carbonyl. 2-hydroxydec-4-enoic acid can then be further oxidized by poxM to yield the alpha-ketoacid 2-oxodec-4-enoicacid, which is reductively aminated by the aminotransferase poxL to yield (S,E)-2-aminodec-4-enoic acid. The Hybrid PKS-NRPS synthetase poxE then performs condensation between the octaketide product of its PKS modules and the amino group of (S,E)-2-aminodec-4-enoic acid which is activated and incorporated by the adenylation domain. The resulting aminoacyl product can be cyclized by the Diels-Alderase PoxQ and reductively released by the reductive (R) domain of poxE to yield an aldehyde intermediate. The released aldehyde is then substrate for a Knoevenagel condensation by the hydrolyase poxO followed by an oxidation at the 5-position of the pyrrolidone ring. The presence of the olefin from the amino acid building block allows for migration of the substituted allyl group to occur. This allylic transposition reaction takes place in a conjugate addition, semipinacol-like fashion to yield a succinimide intermediate. Iterative two-electron oxidations of the C7 methyl of the succinimide intermediate to the carboxylic acid can be catalyzed by one of two remaining cytochrome P450 monooxygenasess poxC or poxD to yield oxaleimide A. Subsequent oxidation yields the maleimide scaffold oxaleimide I. Both oxaleimide A and oxaleimide I can undergo oxidative modifications in the decalin ring to yield the series of products oxaleimides B to H. The sequence is that of Hydroxylase/desaturase poxK from Penicillium oxalicum (strain 114-2 / CGMCC 5302) (Penicillium decumbens).